We begin with the raw amino-acid sequence, 118 residues long: M-zodatoxin-Lt8p (118 aa).

A signal peptide spans 1–3 (AES). Positions 4 to 43 (KPAESEHELAEVEEENELADLEDAVWLEHLADLSDLEEAR) are excised as a propeptide.

This sequence belongs to the cationic peptide 06 (cytoinsectotoxin) family. In terms of tissue distribution, expressed by the venom gland.

Its subcellular location is the secreted. In terms of biological role, insecticidal, cytolytic and antimicrobial peptide. Forms voltage-dependent, ion-permeable channels in membranes. At high concentration causes cell membrane lysis. In Lachesana tarabaevi (Spider), this protein is M-zodatoxin-Lt8p (cit 1-15).